Reading from the N-terminus, the 273-residue chain is Putative pyruvate, phosphate dikinase regulatory protein (273 aa).

149–156 (GPSRTSKT) is an ADP binding site.

It belongs to the pyruvate, phosphate/water dikinase regulatory protein family. PDRP subfamily.

It carries out the reaction N(tele)-phospho-L-histidyl/L-threonyl-[pyruvate, phosphate dikinase] + ADP = N(tele)-phospho-L-histidyl/O-phospho-L-threonyl-[pyruvate, phosphate dikinase] + AMP + H(+). It catalyses the reaction N(tele)-phospho-L-histidyl/O-phospho-L-threonyl-[pyruvate, phosphate dikinase] + phosphate + H(+) = N(tele)-phospho-L-histidyl/L-threonyl-[pyruvate, phosphate dikinase] + diphosphate. Functionally, bifunctional serine/threonine kinase and phosphorylase involved in the regulation of the pyruvate, phosphate dikinase (PPDK) by catalyzing its phosphorylation/dephosphorylation. In Rickettsia bellii (strain OSU 85-389), this protein is Putative pyruvate, phosphate dikinase regulatory protein.